The sequence spans 340 residues: GTPase Obg (340 aa).

The 158-residue stretch at 1-158 folds into the Obg domain; that stretch reads MSFIDEAKIY…KHIILKLKII (158 aa). In terms of domain architecture, OBG-type G spans 159–325; that stretch reads SDVGIIGLPN…LSTLIKQIHK (167 aa). GTP-binding positions include 165 to 172, 190 to 194, 211 to 214, 278 to 281, and 306 to 308; these read GLPNAGKS, FTTLE, DIPG, NKSD, and SSI. The Mg(2+) site is built by S172 and T192.

The protein belongs to the TRAFAC class OBG-HflX-like GTPase superfamily. OBG GTPase family. In terms of assembly, monomer. Mg(2+) is required as a cofactor.

It is found in the cytoplasm. Functionally, an essential GTPase which binds GTP, GDP and possibly (p)ppGpp with moderate affinity, with high nucleotide exchange rates and a fairly low GTP hydrolysis rate. Plays a role in control of the cell cycle, stress response, ribosome biogenesis and in those bacteria that undergo differentiation, in morphogenesis control. This Ehrlichia canis (strain Jake) protein is GTPase Obg.